We begin with the raw amino-acid sequence, 256 residues long: Ribosomal RNA small subunit methyltransferase J (256 aa).

Residues 104–105 (RD), 120–121 (ER), 156–157 (SS), and aspartate 174 each bind S-adenosyl-L-methionine.

The protein belongs to the methyltransferase superfamily. RsmJ family.

The protein localises to the cytoplasm. The enzyme catalyses guanosine(1516) in 16S rRNA + S-adenosyl-L-methionine = N(2)-methylguanosine(1516) in 16S rRNA + S-adenosyl-L-homocysteine + H(+). Specifically methylates the guanosine in position 1516 of 16S rRNA. The chain is Ribosomal RNA small subunit methyltransferase J from Yersinia pseudotuberculosis serotype O:1b (strain IP 31758).